The chain runs to 397 residues: Elongation factor Tu (397 aa).

The 197-residue stretch at 10–206 folds into the tr-type G domain; sequence KPHVNVGTIG…TMDTYFPQPE (197 aa). The segment at 19 to 26 is G1; that stretch reads GHVDHGKT. 19 to 26 provides a ligand contact to GTP; that stretch reads GHVDHGKT. Thr26 provides a ligand contact to Mg(2+). The interval 60–64 is G2; that stretch reads GITIA. A G3 region spans residues 81–84; it reads DCPG. GTP-binding positions include 81 to 85 and 136 to 139; these read DCPGH and NKAD. A G4 region spans residues 136-139; sequence NKAD. The segment at 174 to 176 is G5; that stretch reads SAL.

Belongs to the TRAFAC class translation factor GTPase superfamily. Classic translation factor GTPase family. EF-Tu/EF-1A subfamily. Monomer.

It localises to the cytoplasm. It catalyses the reaction GTP + H2O = GDP + phosphate + H(+). GTP hydrolase that promotes the GTP-dependent binding of aminoacyl-tRNA to the A-site of ribosomes during protein biosynthesis. In Coxiella burnetii (strain Dugway 5J108-111), this protein is Elongation factor Tu.